We begin with the raw amino-acid sequence, 363 residues long: Dihydroorotate dehydrogenase (quinone) (363 aa).

FMN contacts are provided by residues 67-71 (AGFDK) and Thr-91. Lys-71 provides a ligand contact to substrate. Residue 116-120 (NRMGF) coordinates substrate. Positions 156 and 189 each coordinate FMN. Asn-189 is a substrate binding site. The active-site Nucleophile is Ser-192. Asn-194 lines the substrate pocket. The FMN site is built by Lys-231 and Thr-259. Position 260–261 (260–261 (NT)) interacts with substrate. Residues Gly-287, Gly-316, and 337–338 (YT) contribute to the FMN site.

Belongs to the dihydroorotate dehydrogenase family. Type 2 subfamily. Monomer. It depends on FMN as a cofactor.

It is found in the cell membrane. The catalysed reaction is (S)-dihydroorotate + a quinone = orotate + a quinol. The protein operates within pyrimidine metabolism; UMP biosynthesis via de novo pathway; orotate from (S)-dihydroorotate (quinone route): step 1/1. Catalyzes the conversion of dihydroorotate to orotate with quinone as electron acceptor. In Kocuria rhizophila (strain ATCC 9341 / DSM 348 / NBRC 103217 / DC2201), this protein is Dihydroorotate dehydrogenase (quinone).